The primary structure comprises 497 residues: Cytochrome P450 2D6 (497 aa).

Aspartate 301 is a binding site for substrate. Residue cysteine 443 participates in heme binding.

The protein belongs to the cytochrome P450 family. It depends on heme as a cofactor.

The protein localises to the endoplasmic reticulum membrane. It is found in the microsome membrane. It carries out the reaction (5Z,8Z,11Z,14Z)-eicosatetraenoate + reduced [NADPH--hemoprotein reductase] + O2 = (8R,9S)-epoxy-(5Z,11Z,14Z)-eicosatrienoate + oxidized [NADPH--hemoprotein reductase] + H2O + H(+). It catalyses the reaction (5Z,8Z,11Z,14Z)-eicosatetraenoate + reduced [NADPH--hemoprotein reductase] + O2 = (11R,12S)-epoxy-(5Z,8Z,14Z)-eicosatrienoate + oxidized [NADPH--hemoprotein reductase] + H2O + H(+). The enzyme catalyses (5Z,8Z,11Z,14Z)-eicosatetraenoate + reduced [NADPH--hemoprotein reductase] + O2 = (14S,15R)-epoxy-(5Z,8Z,11Z)-eicosatrienoate + oxidized [NADPH--hemoprotein reductase] + H2O + H(+). The catalysed reaction is N-(5Z,8Z,11Z,14Z-eicosatetraenoyl)-ethanolamine + reduced [NADPH--hemoprotein reductase] + O2 = N-(8,9-epoxy-5Z,11Z,14Z-eicosatrienoyl)-ethanolamine + oxidized [NADPH--hemoprotein reductase] + H2O + H(+). It carries out the reaction N-(5Z,8Z,11Z,14Z-eicosatetraenoyl)-ethanolamine + reduced [NADPH--hemoprotein reductase] + O2 = N-(11,12-epoxy-5Z,8Z,14Z-eicosatrienoyl)-ethanolamine + oxidized [NADPH--hemoprotein reductase] + H2O + H(+). It catalyses the reaction N-(5Z,8Z,11Z,14Z-eicosatetraenoyl)-ethanolamine + reduced [NADPH--hemoprotein reductase] + O2 = N-(14,15-epoxy-5Z,8Z,11Z-eicosatrienoyl)-ethanolamine + oxidized [NADPH--hemoprotein reductase] + H2O + H(+). The enzyme catalyses N-(5Z,8Z,11Z,14Z-eicosatetraenoyl)-ethanolamine + reduced [NADPH--hemoprotein reductase] + O2 = N-(20-hydroxy-5Z,8Z,11Z,14Z-eicosatetraenoyl)-ethanolamine + oxidized [NADPH--hemoprotein reductase] + H2O + H(+). The catalysed reaction is (5Z,8Z,11Z,14Z,17Z)-eicosapentaenoate + reduced [NADPH--hemoprotein reductase] + O2 = (17S,18R)-epoxy-(5Z,8Z,11Z,14Z)-eicosatetraenoate + oxidized [NADPH--hemoprotein reductase] + H2O + H(+). It carries out the reaction (4Z,7Z,10Z,13Z,16Z,19Z)-docosahexaenoate + reduced [NADPH--hemoprotein reductase] + O2 = (19R,20S)-epoxy-(4Z,7Z,10Z,13Z,16Z)-docosapentaenoate + oxidized [NADPH--hemoprotein reductase] + H2O + H(+). It catalyses the reaction (4Z,7Z,10Z,13Z,16Z,19Z)-docosahexaenoate + reduced [NADPH--hemoprotein reductase] + O2 = (19S,20R)-epoxy-(4Z,7Z,10Z,13Z,16Z)-docosapentaenoate + oxidized [NADPH--hemoprotein reductase] + H2O + H(+). The enzyme catalyses cholesterol + reduced [NADPH--hemoprotein reductase] + O2 = 25-hydroxycholesterol + oxidized [NADPH--hemoprotein reductase] + H2O + H(+). The catalysed reaction is all-trans-retinol + reduced [NADPH--hemoprotein reductase] + O2 = all-trans-retinal + oxidized [NADPH--hemoprotein reductase] + 2 H2O + H(+). It participates in cofactor metabolism; retinol metabolism. The protein operates within lipid metabolism; fatty acid metabolism. It functions in the pathway steroid metabolism; cholesterol metabolism. In terms of biological role, a cytochrome P450 monooxygenase involved in the metabolism of fatty acids, steroids and retinoids. Mechanistically, uses molecular oxygen inserting one oxygen atom into a substrate, and reducing the second into a water molecule, with two electrons provided by NADPH via cytochrome P450 reductase (NADPH--hemoprotein reductase). Catalyzes the epoxidation of double bonds of polyunsaturated fatty acids (PUFA). Metabolizes endocannabinoid arachidonoylethanolamide (anandamide) to 20-hydroxyeicosatetraenoic acid ethanolamide (20-HETE-EA) and 8,9-, 11,12-, and 14,15-epoxyeicosatrienoic acid ethanolamides (EpETrE-EAs), potentially modulating endocannabinoid system signaling. Catalyzes the hydroxylation of carbon-hydrogen bonds. Metabolizes cholesterol toward 25-hydroxycholesterol, a physiological regulator of cellular cholesterol homeostasis. Catalyzes the oxidative transformations of all-trans retinol to all-trans retinal, a precursor for the active form all-trans-retinoic acid. Also involved in the oxidative metabolism of drugs such as antiarrhythmics, adrenoceptor antagonists, and tricyclic antidepressants. The sequence is that of Cytochrome P450 2D6 from Homo sapiens (Human).